We begin with the raw amino-acid sequence, 393 residues long: Phospho-N-acetylmuramoyl-pentapeptide-transferase (393 aa).

Transmembrane regions (helical) follow at residues 29-49 (RAVMAAMTALLIGLALGPIVI), 75-95 (TPTMGGALILLAIAISTLLWF), 101-121 (FVWIVMIVTFGFGAIGWVDDW), 138-158 (YFWQSLIGLVAALYLAFSVSE), 193-213 (SISYPLGVFGFIFLTYVVIVG), 226-246 (GLAIMPVVMVGSALGIFAYAT), 263-283 (AGELMIFCAAMAGAGLAFLWF), 290-310 (VFMGDVGALALGGALGTIAVI), 315-335 (VVLAIMGGIFVLEALSVMAQV), and 370-390 (QVVVRFWIITMLLCLVGLSSL).

This sequence belongs to the glycosyltransferase 4 family. MraY subfamily. The cofactor is Mg(2+).

It localises to the cell inner membrane. The catalysed reaction is UDP-N-acetyl-alpha-D-muramoyl-L-alanyl-gamma-D-glutamyl-meso-2,6-diaminopimeloyl-D-alanyl-D-alanine + di-trans,octa-cis-undecaprenyl phosphate = di-trans,octa-cis-undecaprenyl diphospho-N-acetyl-alpha-D-muramoyl-L-alanyl-D-glutamyl-meso-2,6-diaminopimeloyl-D-alanyl-D-alanine + UMP. It participates in cell wall biogenesis; peptidoglycan biosynthesis. Its function is as follows. Catalyzes the initial step of the lipid cycle reactions in the biosynthesis of the cell wall peptidoglycan: transfers peptidoglycan precursor phospho-MurNAc-pentapeptide from UDP-MurNAc-pentapeptide onto the lipid carrier undecaprenyl phosphate, yielding undecaprenyl-pyrophosphoryl-MurNAc-pentapeptide, known as lipid I. This is Phospho-N-acetylmuramoyl-pentapeptide-transferase from Methylibium petroleiphilum (strain ATCC BAA-1232 / LMG 22953 / PM1).